Reading from the N-terminus, the 486-residue chain is N-succinylglutamate 5-semialdehyde dehydrogenase (486 aa).

Residue 221–226 (GSSATG) coordinates NAD(+). Residues Glu244 and Cys278 contribute to the active site.

The protein belongs to the aldehyde dehydrogenase family. AstD subfamily.

It carries out the reaction N-succinyl-L-glutamate 5-semialdehyde + NAD(+) + H2O = N-succinyl-L-glutamate + NADH + 2 H(+). It participates in amino-acid degradation; L-arginine degradation via AST pathway; L-glutamate and succinate from L-arginine: step 4/5. Functionally, catalyzes the NAD-dependent reduction of succinylglutamate semialdehyde into succinylglutamate. The protein is N-succinylglutamate 5-semialdehyde dehydrogenase of Chromobacterium violaceum (strain ATCC 12472 / DSM 30191 / JCM 1249 / CCUG 213 / NBRC 12614 / NCIMB 9131 / NCTC 9757 / MK).